The primary structure comprises 284 residues: Bifunctional protein FolD (284 aa).

NADP(+) is bound by residues glycine 165 to serine 167 and serine 190.

This sequence belongs to the tetrahydrofolate dehydrogenase/cyclohydrolase family. Homodimer.

It catalyses the reaction (6R)-5,10-methylene-5,6,7,8-tetrahydrofolate + NADP(+) = (6R)-5,10-methenyltetrahydrofolate + NADPH. The enzyme catalyses (6R)-5,10-methenyltetrahydrofolate + H2O = (6R)-10-formyltetrahydrofolate + H(+). The protein operates within one-carbon metabolism; tetrahydrofolate interconversion. In terms of biological role, catalyzes the oxidation of 5,10-methylenetetrahydrofolate to 5,10-methenyltetrahydrofolate and then the hydrolysis of 5,10-methenyltetrahydrofolate to 10-formyltetrahydrofolate. The polypeptide is Bifunctional protein FolD (Streptococcus sanguinis (strain SK36)).